The primary structure comprises 336 residues: Homoserine dehydrogenase (336 aa).

F8 serves as a coordination point for NADPH. 3 residues coordinate NAD(+): A10, I11, and T94. Positions 11, 94, and 123 each coordinate NADPH. The NADP(+) site is built by I11, T94, and K123. Na(+) is bound by residues E147, V150, and G152. NADP(+) contacts are provided by G205 and E208. Residues E208 and D219 each contribute to the L-homoserine site. The active-site Proton donor is K223. G315 serves as a coordination point for NADPH. An NAD(+)-binding site is contributed by G315. G315 contributes to the NADP(+) binding site.

It belongs to the homoserine dehydrogenase family. It depends on a metal cation as a cofactor.

It carries out the reaction L-homoserine + NADP(+) = L-aspartate 4-semialdehyde + NADPH + H(+). It catalyses the reaction L-homoserine + NAD(+) = L-aspartate 4-semialdehyde + NADH + H(+). The protein operates within amino-acid biosynthesis; L-methionine biosynthesis via de novo pathway; L-homoserine from L-aspartate: step 3/3. It participates in amino-acid biosynthesis; L-threonine biosynthesis; L-threonine from L-aspartate: step 3/5. Catalyzes the conversion of L-aspartate-beta-semialdehyde (L-Asa) to L-homoserine (L-Hse), the third step in the biosynthesis of threonine and methionine from aspartate. The protein is Homoserine dehydrogenase (hom) of Methanocaldococcus jannaschii (strain ATCC 43067 / DSM 2661 / JAL-1 / JCM 10045 / NBRC 100440) (Methanococcus jannaschii).